The following is a 20-amino-acid chain: Beta-fibrinogenase jerdofibrase (20 aa).

One can recognise a Peptidase S1 domain in the interval 1-20 (VIGGDECNINEHPFLVLVYY).

This sequence belongs to the peptidase S1 family. Snake venom subfamily. As to quaternary structure, monomer. Expressed by the venom gland.

It localises to the secreted. Inhibited by PMSF and soybean trypsin inhibitor. Partially inhibited by DTT and cysteine. Not affected by EDTA. In terms of biological role, fibrin(ogen)olytic serine protease degrades Bbeta-chain of human fibrinogen (FGB) and shows a lower activity on Aa-chain (FGA). Also degrades fibrin directly. Releases fibrinopeptide B and a small amount of fibrinopeptide A. Has also be shown to catalyze the hydrolysis of some chromogenic substrates such as S2238, S2160, S2302 and S2251. This is Beta-fibrinogenase jerdofibrase from Protobothrops jerdonii (Jerdon's pitviper).